The following is a 208-amino-acid chain: MVSRRVQALLDQLRAQGIKDEQVLNALAAVPREKFIDEAFEQKAWDNIALPIGQGQTISQPYMVARMTELLELTPQSRVLEIGTGSGYQTAILAHLVQHVCSVERIKGLQWQARRRLKNLDLHNVSTRHGDGWQGWQARAPFDAIIVTAAPPEIPTALMTQLDEGGILVLPVGEEHQYLKRVRRRGGEFIIDTVEAVRFVPLVKGELA.

Ser-59 is a catalytic residue.

It belongs to the methyltransferase superfamily. L-isoaspartyl/D-aspartyl protein methyltransferase family.

The protein resides in the cytoplasm. The catalysed reaction is [protein]-L-isoaspartate + S-adenosyl-L-methionine = [protein]-L-isoaspartate alpha-methyl ester + S-adenosyl-L-homocysteine. Its function is as follows. Catalyzes the methyl esterification of L-isoaspartyl residues in peptides and proteins that result from spontaneous decomposition of normal L-aspartyl and L-asparaginyl residues. It plays a role in the repair and/or degradation of damaged proteins. The chain is Protein-L-isoaspartate O-methyltransferase from Escherichia fergusonii (strain ATCC 35469 / DSM 13698 / CCUG 18766 / IAM 14443 / JCM 21226 / LMG 7866 / NBRC 102419 / NCTC 12128 / CDC 0568-73).